The chain runs to 860 residues: Endo-1,4-beta-xylanase B (860 aa).

The first 20 residues, 1-20 (MKFSSANKILFSGLVASANA), serve as a signal peptide directing secretion. The 304-residue stretch at 21–324 (YDLLKDYAGD…KPVYNTLLNI (304 aa)) folds into the GH10 domain. Glu144 (proton donor) is an active-site residue. The active-site Nucleophile is Glu255. Cys278 and Cys284 are disulfide-bonded. N-linked (GlcNAc...) asparagine glycans are attached at residues Asn295, Asn309, Asn359, and Asn374. Polar residues-rich tracts occupy residues 330 to 362 (RPASSSAKTLPGNSKSKTLPGVNSKTLPGNKSK) and 371 to 418 (LPGN…NSKT). The disordered stretch occupies residues 330 to 793 (RPASSSAKTL…TKTLPGGACK (464 aa)). Copy 1 of the repeat occupies 375 to 382 (KSKTLPGG). Positions 375-782 (KSKTLPGGNS…GGKSKTLPGG (408 aa)) are 47 X 8 AA tandem repeats of [SKN]-S-K-T-L-P-G-G. A glycan (N-linked (GlcNAc...) asparagine) is linked at Asn390. The stretch at 391-398 (KSKTLPGG) is repeat 2. Asn406 carries N-linked (GlcNAc...) asparagine glycosylation. A run of 45 repeats spans residues 415-422 (NSKTLPGG), 431-438 (NSKTLPGG), 439-446 (KSKTLPGG), 447-454 (NSKTLPGG), 455-462 (KSKTLPGG), 463-470 (NSKTLPGG), 471-478 (SSKTLPGG), 479-486 (KSKTLPGG), 487-494 (NSKTLPGG), 495-502 (SSKTLPGG), 503-510 (KSKTLPGG), 511-518 (SSKTLPGG), 519-526 (KSKTLPGG), 527-534 (NSKTLPGG), 535-542 (NSKTLPGG), 543-550 (SSKTLPGG), 551-558 (KSKTLPGG), 559-566 (NSKTLPGG), 567-574 (SSKTLPGG), 575-582 (KSKTLPGG), 583-590 (NSKTLPGG), 591-598 (NSKTLPGG), 599-606 (KSKTLPGG), 607-614 (NSKTLPGG), 615-622 (SSKTLPGG), 623-630 (KSKTLPGG), 631-638 (SSKTLPGG), 639-646 (KSKTLPGG), 647-654 (NSKTLPGG), 655-662 (NSKTLPGG), 663-670 (SSKTLPGG), 671-678 (KSKTLPGG), 679-686 (SSKTLPGG), 687-694 (KSKTLPGG), 695-702 (NSKTLPGG), 703-710 (KSKTLPGG), 711-718 (NSKTLPGG), 719-726 (KSKTLPGG), 727-734 (NSKTLPGG), 735-742 (KSKTLPGG), 743-750 (NSKTLPGG), 751-758 (SSKTLPGG), 759-766 (KSKTLPGG), 767-774 (NSKTLPGG), and 775-782 (KSKTLPGG). Polar residues-rich tracts occupy residues 461–474 (GGNSKTLPGGSSKT) and 485–498 (GGNSKTLPGGSSKT). 4 stretches are compositionally biased toward polar residues: residues 525–546 (GGNSKTLPGGNSKTLPGGSSKT), 557–570 (GGNSKTLPGGSSKT), 581–594 (GGNSKTLPGGNSKT), and 605–618 (GGNSKTLPGGSSKT). Residues 645-666 (GGNSKTLPGGNSKTLPGGSSKT) show a composition bias toward polar residues. Residues 741-754 (GGNSKTLPGGSSKT) are compositionally biased toward polar residues. Positions 824–860 (NCAAKWGQCGGNGFNGPTCCQNGSRCQFVNEWYSQCL) constitute a CBM1 domain. Residue Asn845 is glycosylated (N-linked (GlcNAc...) asparagine).

The protein belongs to the glycosyl hydrolase 10 (cellulase F) family.

The protein localises to the secreted. The catalysed reaction is Endohydrolysis of (1-&gt;4)-beta-D-xylosidic linkages in xylans.. The protein operates within glycan degradation; xylan degradation. Endo-1,4-beta-xylanase involved in the hydrolysis of xylan, a major structural heterogeneous polysaccharide found in plant biomass representing the second most abundant polysaccharide in the biosphere, after cellulose. Hydrolyzes both unsubstituted (oat spelts) and highly substituted (rye and wheat) forms of arabinoxylanslans. The chain is Endo-1,4-beta-xylanase B (xynB) from Neocallimastix patriciarum (Rumen fungus).